Here is a 102-residue protein sequence, read N- to C-terminus: uncharacterized protein (102 aa).

It belongs to the Gram-positive plasmids replication protein type 2 family.

This is an uncharacterized protein from Staphylococcus aureus.